The following is a 214-amino-acid chain: Pyridoxine/pyridoxamine 5'-phosphate oxidase (214 aa).

Residues 9–12 and Lys-68 each bind substrate; that span reads RRSY. FMN-binding positions include 63 to 68, 78 to 79, Lys-85, and Gln-107; these read RVVLLK and YT. Residues Tyr-125, Arg-129, and Ser-133 each coordinate substrate. FMN contacts are provided by residues 142 to 143 and Trp-187; that span reads QS. Position 193–195 (193–195) interacts with substrate; the sequence is RLH. FMN is bound at residue Arg-197.

This sequence belongs to the pyridoxamine 5'-phosphate oxidase family. Homodimer. It depends on FMN as a cofactor.

The catalysed reaction is pyridoxamine 5'-phosphate + O2 + H2O = pyridoxal 5'-phosphate + H2O2 + NH4(+). It catalyses the reaction pyridoxine 5'-phosphate + O2 = pyridoxal 5'-phosphate + H2O2. It functions in the pathway cofactor metabolism; pyridoxal 5'-phosphate salvage; pyridoxal 5'-phosphate from pyridoxamine 5'-phosphate: step 1/1. It participates in cofactor metabolism; pyridoxal 5'-phosphate salvage; pyridoxal 5'-phosphate from pyridoxine 5'-phosphate: step 1/1. In terms of biological role, catalyzes the oxidation of either pyridoxine 5'-phosphate (PNP) or pyridoxamine 5'-phosphate (PMP) into pyridoxal 5'-phosphate (PLP). This is Pyridoxine/pyridoxamine 5'-phosphate oxidase from Christiangramia forsetii (strain DSM 17595 / CGMCC 1.15422 / KT0803) (Gramella forsetii).